The chain runs to 100 residues: uncharacterized protein (100 aa).

The tract at residues 40–100 (GDQMARKATS…DPTKNKSGRG (61 aa)) is disordered.

This is an uncharacterized protein from Mycobacterium tuberculosis (strain ATCC 25618 / H37Rv).